The chain runs to 73 residues: Conotoxin Bt11.1 (73 aa).

Positions 1-20 are cleaved as a signal peptide; it reads MKLCVAFLLVLVILPSVIGG. The propeptide occupies 21 to 35; sequence KPSERTLSGATRRGD. Disulfide bonds link C39–C53, C46–C58, C52–C63, and C57–C70.

Belongs to the conotoxin I1 superfamily. Expressed by the venom duct.

The protein localises to the secreted. The chain is Conotoxin Bt11.1 from Conus betulinus (Beech cone).